Consider the following 408-residue polypeptide: 3-hydroxy-3-methylglutaryl-coenzyme A reductase (408 aa).

Catalysis depends on charge relay system residues Glu101 and Asp307. The active-site Proton donor is His403.

Belongs to the HMG-CoA reductase family.

It catalyses the reaction (R)-mevalonate + 2 NADP(+) + CoA = (3S)-3-hydroxy-3-methylglutaryl-CoA + 2 NADPH + 2 H(+). It functions in the pathway metabolic intermediate biosynthesis; (R)-mevalonate biosynthesis; (R)-mevalonate from acetyl-CoA: step 3/3. In terms of biological role, converts HMG-CoA to mevalonate. In Pyrococcus abyssi (strain GE5 / Orsay), this protein is 3-hydroxy-3-methylglutaryl-coenzyme A reductase (hmgA).